A 100-amino-acid chain; its full sequence is Small ribosomal subunit protein uS14c (100 aa).

It belongs to the universal ribosomal protein uS14 family. In terms of assembly, part of the 30S ribosomal subunit.

It localises to the plastid. The protein resides in the chloroplast. In terms of biological role, binds 16S rRNA, required for the assembly of 30S particles. The protein is Small ribosomal subunit protein uS14c of Phaeodactylum tricornutum (strain CCAP 1055/1).